A 153-amino-acid polypeptide reads, in one-letter code: Insulin-like growth factor 1 (153 aa).

The interval 49-77 is b; sequence GPETLCGAELVDALQFVCGPRGFYFNKPT. Intrachain disulfides connect cysteine 54–cysteine 96, cysteine 66–cysteine 109, and cysteine 95–cysteine 100. A c region spans residues 78–89; it reads GYGSSIRRAPQT. The tract at residues 90–110 is a; that stretch reads GIVDECCFRSCDLRRLEMYCA. The interval 111–118 is d; it reads PLKPTKSA. A propeptide spans 119-153 (e peptide); that stretch reads RSIRAQRHTDMPKTQKEVHLKNTSRGSAGNKTYRM. Residues 119-153 form a disordered region; that stretch reads RSIRAQRHTDMPKTQKEVHLKNTSRGSAGNKTYRM. The segment covering 125–138 has biased composition (basic and acidic residues); that stretch reads RHTDMPKTQKEVHL. Residues 139 to 153 show a composition bias toward polar residues; the sequence is KNTSRGSAGNKTYRM.

The protein belongs to the insulin family. In terms of assembly, forms a ternary complex with IGFR1 and ITGAV:ITGB3. Forms a ternary complex with IGFR1 and ITGA6:ITGB4. Forms a ternary complex with IGFBP3 and ALS.

The protein localises to the secreted. Functionally, the insulin-like growth factors, isolated from plasma, are structurally and functionally related to insulin but have a much higher growth-promoting activity. May be a physiological regulator of [1-14C]-2-deoxy-D-glucose (2DG) transport and glycogen synthesis in osteoblasts. Stimulates glucose transport in bone-derived osteoblastic (PyMS) cells and is effective at much lower concentrations than insulin, not only regarding glycogen and DNA synthesis but also with regard to enhancing glucose uptake. May play a role in synapse maturation. Ca(2+)-dependent exocytosis of IGF1 is required for sensory perception of smell in the olfactory bulb. Acts as a ligand for IGF1R. Binds to the alpha subunit of IGF1R, leading to the activation of the intrinsic tyrosine kinase activity which autophosphorylates tyrosine residues in the beta subunit thus initiating a cascade of down-stream signaling events leading to activation of the PI3K-AKT/PKB and the Ras-MAPK pathways. Binds to integrins ITGAV:ITGB3 and ITGA6:ITGB4. Its binding to integrins and subsequent ternary complex formation with integrins and IGFR1 are essential for IGF1 signaling. Induces the phosphorylation and activation of IGFR1, MAPK3/ERK1, MAPK1/ERK2 and AKT1. As part of the MAPK/ERK signaling pathway, acts as a negative regulator of apoptosis in cardiomyocytes via promotion of STUB1/CHIP-mediated ubiquitination and degradation of ICER-type isoforms of CREM. The sequence is that of Insulin-like growth factor 1 from Rattus norvegicus (Rat).